The chain runs to 668 residues: Probable 6-phosphofructo-2-kinase PB17E12.14c (668 aa).

Residues 1–14 (MSNNNNKDDSELQS) are compositionally biased toward basic and acidic residues. 2 disordered regions span residues 1–105 (MSNN…GSRP) and 136–185 (HRVP…EATN). 3 stretches are compositionally biased toward polar residues: residues 46-56 (NDHSFTNTDSV), 65-86 (SPVS…QNSP), and 164-184 (SSMS…SEAT). ATP is bound at residue 197–204 (GLPARGKS). Catalysis depends on residues aspartate 281 and cysteine 312. Residue arginine 346 coordinates beta-D-fructose 6-phosphate. The active site involves glutamate 540. Histidine 608 acts as the Proton donor in catalysis.

The enzyme catalyses beta-D-fructose 6-phosphate + ATP = beta-D-fructose 2,6-bisphosphate + ADP + H(+). In terms of biological role, synthesis of fructose 2,6-bisphosphate. This is Probable 6-phosphofructo-2-kinase PB17E12.14c from Schizosaccharomyces pombe (strain 972 / ATCC 24843) (Fission yeast).